The chain runs to 317 residues: Probable deoxyhypusine synthase (317 aa).

Lys285 functions as the Nucleophile in the catalytic mechanism.

It belongs to the deoxyhypusine synthase family. NAD(+) is required as a cofactor.

It carries out the reaction [eIF5A protein]-L-lysine + spermidine = [eIF5A protein]-deoxyhypusine + propane-1,3-diamine. Its pathway is protein modification; eIF5A hypusination. Its function is as follows. Catalyzes the NAD-dependent oxidative cleavage of spermidine and the subsequent transfer of the butylamine moiety of spermidine to the epsilon-amino group of a specific lysine residue of the eIF-5A precursor protein to form the intermediate deoxyhypusine residue. This Methanosarcina thermophila protein is Probable deoxyhypusine synthase (dys).